We begin with the raw amino-acid sequence, 131 residues long: Small ribosomal subunit protein uS8 (131 aa).

The protein belongs to the universal ribosomal protein uS8 family. Part of the 30S ribosomal subunit. Contacts proteins S5 and S12.

Its function is as follows. One of the primary rRNA binding proteins, it binds directly to 16S rRNA central domain where it helps coordinate assembly of the platform of the 30S subunit. In Delftia acidovorans (strain DSM 14801 / SPH-1), this protein is Small ribosomal subunit protein uS8.